Here is a 575-residue protein sequence, read N- to C-terminus: Proline--tRNA ligase 1 (575 aa).

It belongs to the class-II aminoacyl-tRNA synthetase family. ProS type 1 subfamily. In terms of assembly, homodimer.

The protein localises to the cytoplasm. It catalyses the reaction tRNA(Pro) + L-proline + ATP = L-prolyl-tRNA(Pro) + AMP + diphosphate. Catalyzes the attachment of proline to tRNA(Pro) in a two-step reaction: proline is first activated by ATP to form Pro-AMP and then transferred to the acceptor end of tRNA(Pro). As ProRS can inadvertently accommodate and process non-cognate amino acids such as alanine and cysteine, to avoid such errors it has two additional distinct editing activities against alanine. One activity is designated as 'pretransfer' editing and involves the tRNA(Pro)-independent hydrolysis of activated Ala-AMP. The other activity is designated 'posttransfer' editing and involves deacylation of mischarged Ala-tRNA(Pro). The misacylated Cys-tRNA(Pro) is not edited by ProRS. This chain is Proline--tRNA ligase 1, found in Anaeromyxobacter dehalogenans (strain 2CP-C).